The following is a 359-amino-acid chain: Heat-inducible transcription repressor HrcA (359 aa).

Belongs to the HrcA family.

Functionally, negative regulator of class I heat shock genes (grpE-dnaK-dnaJ and groELS operons). Prevents heat-shock induction of these operons. In Roseiflexus sp. (strain RS-1), this protein is Heat-inducible transcription repressor HrcA.